The sequence spans 296 residues: Protoheme IX farnesyltransferase (296 aa).

The next 9 helical transmembrane spans lie at 11-31, 35-55, 84-104, 107-127, 132-152, 162-182, 208-228, 229-249, and 264-284; these read PGII…AAQG, YPLF…GCVF, VTLV…YIAA, LAMW…SLYM, VYGT…GYCA, LILL…IAIF, ITLY…GGYA, GYKY…MALS, and LFVF…VDSM.

Belongs to the UbiA prenyltransferase family. Protoheme IX farnesyltransferase subfamily.

The protein resides in the cell inner membrane. The catalysed reaction is heme b + (2E,6E)-farnesyl diphosphate + H2O = Fe(II)-heme o + diphosphate. It participates in porphyrin-containing compound metabolism; heme O biosynthesis; heme O from protoheme: step 1/1. Its function is as follows. Converts heme B (protoheme IX) to heme O by substitution of the vinyl group on carbon 2 of heme B porphyrin ring with a hydroxyethyl farnesyl side group. This chain is Protoheme IX farnesyltransferase, found in Pectobacterium carotovorum subsp. carotovorum (strain PC1).